The sequence spans 372 residues: Probable butyrate kinase (372 aa).

Belongs to the acetokinase family.

It localises to the cytoplasm. The enzyme catalyses butanoate + ATP = butanoyl phosphate + ADP. This chain is Probable butyrate kinase, found in Oleidesulfovibrio alaskensis (strain ATCC BAA-1058 / DSM 17464 / G20) (Desulfovibrio alaskensis).